A 111-amino-acid chain; its full sequence is Phosphoribosyl-ATP pyrophosphatase (111 aa).

This sequence belongs to the PRA-PH family.

It localises to the cytoplasm. It catalyses the reaction 1-(5-phospho-beta-D-ribosyl)-ATP + H2O = 1-(5-phospho-beta-D-ribosyl)-5'-AMP + diphosphate + H(+). It functions in the pathway amino-acid biosynthesis; L-histidine biosynthesis; L-histidine from 5-phospho-alpha-D-ribose 1-diphosphate: step 2/9. The polypeptide is Phosphoribosyl-ATP pyrophosphatase (Pseudomonas putida (strain GB-1)).